We begin with the raw amino-acid sequence, 184 residues long: NADH-dependent flavin reductase subunit 2 (184 aa).

The protein belongs to the NADH-dependent flavin reductase family. Requires LJ_0548 for activity, but the exact composition of the enzyme is unclear.

The enzyme catalyses a reduced flavin + NAD(+) = an oxidized flavin + NADH + 2 H(+). In terms of biological role, component of an enzyme that catalyzes the reduction of free flavins (FMN, FAD and riboflavin) by NADH; the reduced flavins produced by this reaction likely spontaneously react with oxygen, yielding hydrogen peroxide. Is responsible for the major H(2)O(2) production in L.johnsonii in the presence of oxygen. Cannot use NADPH instead of NADH as the electron donor. This is NADH-dependent flavin reductase subunit 2 (nfr2) from Lactobacillus johnsonii (strain CNCM I-12250 / La1 / NCC 533).